The primary structure comprises 245 residues: Bax inhibitor 1 (245 aa).

At 1-30 (MADTANYINDRFQTFMNGLGDRYEPYVREH) the chain is on the cytoplasmic side. A helical transmembrane segment spans residues 31–51 (LSKVYMVLGSTAAATAMGAML). Residues 52–55 (QMRD) are Lumenal-facing. A helical membrane pass occupies residues 56–76 (FLDLGVLAAVATLVLVLGLHF). At 77 to 88 (YKDDGKNYYTRL) the chain is on the cytoplasmic side. Residues 89-109 (GMLYAFGFCSGQTLGPLLGYI) form a helical membrane-spanning segment. Residues 110 to 115 (CSINPA) lie on the Lumenal side of the membrane. Residues 116-136 (IILSALTGTFVTFISLSLSAL) form a helical membrane-spanning segment. The Cytoplasmic segment spans residues 137 to 142 (LAEQGK). The chain crosses the membrane as a helical span at residues 143–163 (YLYLGGMLVSVINTMALLSLF). Topologically, residues 164–169 (NMVFKS) are lumenal. The helical transmembrane segment at 170-190 (YFVQVTQLYVGVFVMAAFIVY) threads the bilayer. Over 191–245 (DTQNIVEKCRNGNRDVVQHALDLFFDVLSMFRRLLIILTQKEERKQNERRQNKTK) the chain is Cytoplasmic.

Belongs to the BI1 family.

The protein resides in the endoplasmic reticulum membrane. In terms of biological role, suppressor of apoptosis. Modulates unfolded protein response signaling. Negatively regulates autophagy and autophagosome formation, especially during periods of nutrient deprivation, and reduces cell survival during starvation. In Drosophila melanogaster (Fruit fly), this protein is Bax inhibitor 1.